A 674-amino-acid chain; its full sequence is Polyunsaturated fatty acid 5-lipoxygenase (674 aa).

Residues 2–118 (PSYTVTVATG…EIVLRDGRAK (117 aa)) enclose the PLAT domain. The Ca(2+) site is built by glycine 17, threonine 18, aspartate 19, asparagine 44, aspartate 45, glutamate 47, aspartate 79, and aspartate 80. Residues 119-674 (LARDDQIHIL…PDRIPNSVAI (556 aa)) enclose the Lipoxygenase domain. At serine 272 the chain carries Phosphoserine. Residues histidine 368 and histidine 373 each coordinate Fe cation. Serine 524 is subject to Phosphoserine. The Fe cation site is built by histidine 551, asparagine 555, and isoleucine 674.

The protein belongs to the lipoxygenase family. Homodimer. Interacts with ALOX5AP and LTC4S. Interacts with COTL1, the interaction is required for stability and efficient catalytic activity. Interacts with PIK3R1; this interaction bridges ALOX5 with CD40 after CD40 ligation in B cells and leads to the production of reactive oxygen species (ROS). Interacts (via PLAT domain) with DICER1 (via Dicer dsRNA-binding fold domain); this interaction enhances arachidonate 5-lipoxygenase activity and modifies the miRNA precursor processing activity of DICER1. It depends on Fe cation as a cofactor. Post-translationally, serine phosphorylation by MAPKAPK2 is stimulated by arachidonic acid. Phosphorylation on Ser-524 by PKA has an inhibitory effect. Phosphorylation on Ser-272 prevents export from the nucleus. Phosphorylation at Ser-524 is stimulated by 8-bromo-3',5'-cyclic AMP or prostaglandin E2. Expressed in skin Langerhans cells and their emigrated counterparts in draining lymph nodes. Highly expressed in circulating leukocytes.

Its subcellular location is the cytoplasm. It localises to the nucleus matrix. The protein localises to the nucleus membrane. It is found in the perinuclear region. The protein resides in the cytosol. Its subcellular location is the nucleus envelope. It localises to the nucleus intermembrane space. The enzyme catalyses (5Z,8Z,11Z,14Z)-eicosatetraenoate + O2 = (5S)-hydroperoxy-(6E,8Z,11Z,14Z)-eicosatetraenoate. It carries out the reaction (5Z,8Z,11Z,14Z)-eicosatetraenoate + O2 = leukotriene A4 + H2O. The catalysed reaction is (5Z,8Z,11Z,14Z)-eicosatetraenoate + O2 = (8S)-hydroperoxy-(5Z,9E,11Z,14Z)-eicosatetraenoate. It catalyses the reaction (5Z,8Z,11Z,14Z)-eicosatetraenoate + O2 = (12S)-hydroperoxy-(5Z,8Z,10E,14Z)-eicosatetraenoate. The enzyme catalyses 18-HEPE + O2 = (5S)-hydroperoxy-18-hydroxy-(7E,9E,11Z,14Z,16E)-eicosapentaenoate. It carries out the reaction (18R)-hydroxy-(5Z,8Z,11Z,14Z,16E)-eicosapentaenoate + O2 = (5S)-hydroperoxy-(18R)-hydroxy-(6E,8Z,11Z,14Z,16E)-eicosapentaenoate. The catalysed reaction is (18S)-hydroxy-(5Z,8Z,11Z,14Z,16E)-eicosapentaenoate + O2 = (5S)-hydroperoxy-(18S)-hydroxy-(6E,8Z,11Z,14Z,16E)-eicosapentaenoate. It catalyses the reaction (5S)-hydroperoxy-(18S)-hydroxy-(6E,8Z,11Z,14Z,16E)-eicosapentaenoate = (5S,6S)-epoxy-(18S)-hydroxy-(7E,9E,11Z,14Z,16E)-eicosapentaenoate + H2O. The enzyme catalyses (5S)-hydroperoxy-(18R)-hydroxy-(6E,8Z,11Z,14Z,16E)-eicosapentaenoate = (5S,6S)-epoxy-(18R)-hydroxy-(7E,9E,11Z,14Z,16E)-eicosapentaenoate + H2O. It carries out the reaction (5S)-hydroperoxy-18-hydroxy-(7E,9E,11Z,14Z,16E)-eicosapentaenoate = (5S,6S)-epoxy-18-hydroxy-(7E,9E,11Z,14Z,16E)-eicosapentaenoate + H2O. The catalysed reaction is (15S)-hydroxy-(5Z,8Z,11Z,13E)-eicosatetraenoate + O2 = (5S)-hydroperoxy-(15S)-hydroxy-(6E,8Z,11Z,13E)-eicosatetraenoate. It catalyses the reaction (5S)-hydroperoxy-(6E,8Z,11Z,14Z)-eicosatetraenoate = leukotriene A4 + H2O. The enzyme catalyses (5Z,8Z)-eicosadienoate + O2 = (5S)-hydroperoxy-(6E,8Z)-eicosadienoate. It carries out the reaction (12S)-hydroxy-(5Z,8Z,10E,14Z)-eicosatetraenoate + O2 = (5S)-hydroperoxy-(12S)-hydroxy-(6E,8Z,10E,14Z)-eicosatetraenoate. The catalysed reaction is (5Z,8Z,11Z,14Z,17Z)-eicosapentaenoate + O2 = 5-hydroperoxy-(6E,8Z,11Z,14Z,17Z)-eicosapentaenoate. It catalyses the reaction (4Z,7Z,10Z,13Z,16Z,19Z)-docosahexaenoate + O2 = (14S)-hydroperoxy-(4Z,7Z,10Z,12E,16Z,19Z)-docosahexaenoate. The enzyme catalyses (4Z,7Z,10Z,13Z,16Z,19Z)-docosahexaenoate + O2 = (7S)-hydroperoxy-(4Z,8E,10Z,13Z,16Z,19Z)-docosahexaenoate. It carries out the reaction (4Z,7Z,10Z,13Z,16Z,19Z)-docosahexaenoate + O2 = (17S)-hydroperoxy-(4Z,7Z,10Z,13Z,15E,19Z)-docosahexaenoate. It participates in lipid metabolism; leukotriene A4 biosynthesis. In terms of biological role, catalyzes the oxygenation of arachidonate to 5-hydroperoxyeicosatetraenoate (5-HPETE) followed by the dehydration to 5,6- epoxyeicosatetraenoate (Leukotriene A4/LTA4), the first two steps in the biosynthesis of leukotrienes, which are potent mediators of inflammation. Also catalyzes the oxygenation of arachidonic acid into 8-hydroperoxyicosatetraenoic acid (8-HPETE) and 12-hydroperoxyicosatetraenoic acid (12-HPETE). Displays lipoxin synthase activity being able to convert (15S)-HETE into a conjugate tetraene. Although arachidonate is the preferred substrate, this enzyme can also metabolize oxidized fatty acids derived from arachidonate such as (15S)-HETE, eicosapentaenoate (EPA) such as (18R)- and (18S)-HEPE or docosahexaenoate (DHA) which lead to the formation of specialized pro-resolving mediators (SPM) lipoxin and resolvins E and D respectively, therefore it participates in anti-inflammatory responses. Oxidation of DHA directly inhibits endothelial cell proliferation and sprouting angiogenesis via peroxisome proliferator-activated receptor gamma (PPARgamma). It does not catalyze the oxygenation of linoleic acid and does not convert (5S)-HETE to lipoxin isomers. In addition to inflammatory processes, participates in dendritic cell migration, wound healing through an antioxidant mechanism based on heme oxygenase-1 (HO-1) regulation expression, monocyte adhesion to the endothelium via ITGAM expression on monocytes. Moreover, it helps establish an adaptive humoral immunity by regulating primary resting B cells and follicular helper T cells and participates in the CD40-induced production of reactive oxygen species (ROS) after CD40 ligation in B cells through interaction with PIK3R1 that bridges ALOX5 with CD40. May also play a role in glucose homeostasis, regulation of insulin secretion and palmitic acid-induced insulin resistance via AMPK. Can regulate bone mineralization and fat cell differentiation increases in induced pluripotent stem cells. This chain is Polyunsaturated fatty acid 5-lipoxygenase, found in Mus musculus (Mouse).